Consider the following 278-residue polypeptide: Manganese import system permease protein ScaB (278 aa).

8 helical membrane-spanning segments follow: residues A18–L38, G40–F60, I61–I81, V136–L156, V172–Q192, V194–A214, M220–Y240, and I244–I264.

This sequence belongs to the ABC-3 integral membrane protein family.

The protein localises to the cell membrane. Functionally, part of an ABC transporter complex involved in manganese import. The chain is Manganese import system permease protein ScaB from Streptococcus pneumoniae.